The sequence spans 306 residues: UDP-3-O-acyl-N-acetylglucosamine deacetylase (306 aa).

Residues H79, H238, and D242 each contribute to the Zn(2+) site. H265 functions as the Proton donor in the catalytic mechanism.

This sequence belongs to the LpxC family. Zn(2+) serves as cofactor.

It carries out the reaction a UDP-3-O-[(3R)-3-hydroxyacyl]-N-acetyl-alpha-D-glucosamine + H2O = a UDP-3-O-[(3R)-3-hydroxyacyl]-alpha-D-glucosamine + acetate. The protein operates within glycolipid biosynthesis; lipid IV(A) biosynthesis; lipid IV(A) from (3R)-3-hydroxytetradecanoyl-[acyl-carrier-protein] and UDP-N-acetyl-alpha-D-glucosamine: step 2/6. Its function is as follows. Catalyzes the hydrolysis of UDP-3-O-myristoyl-N-acetylglucosamine to form UDP-3-O-myristoylglucosamine and acetate, the committed step in lipid A biosynthesis. The polypeptide is UDP-3-O-acyl-N-acetylglucosamine deacetylase (Shewanella loihica (strain ATCC BAA-1088 / PV-4)).